The chain runs to 731 residues: Small conductance calcium-activated potassium channel protein 3 (731 aa).

Basic and acidic residues predominate over residues 1–11 (MDTSGHFHDSG). Disordered regions lie at residues 1–170 (MDTS…SNPF) and 239–258 (ATHN…FPKA). The segment covering 30 to 40 (QQQQQQQQQQQ) has biased composition (low complexity). Positions 41–51 (QPPPPAPPAAP) are enriched in pro residues. Over residues 52–95 (QQPLGPSLQPQPPQLQQQQQQQQQQQQQQPPHPLSQLAQLQSQP) the composition is skewed to low complexity. Over residues 112 to 132 (PSSNSTAILHPSSRQGSQLNL) the composition is skewed to polar residues. A compositionally biased stretch (low complexity) spans 138–147 (GHSPSSTATS). Position 167 is a phosphoserine (serine 167). Residues 239–256 (ATHNHQHAGTTASSTTFP) show a composition bias toward polar residues. A helical membrane pass occupies residues 288 to 308 (LIFGMFGIVVMVIETELSWGL). The chain crosses the membrane as a helical span at residues 315–335 (FSLALKCLISLSTIILLGLII). A helical transmembrane segment spans residues 366–386 (ISLEMLVCAIHPIPGEYKFFW). A helical membrane pass occupies residues 405–425 (IILSIPMFLRLYLIARVMLLH). Residues 454–474 (LMTICPGTVLLVFSISLWIIA) form a helical membrane-spanning segment. Residues 494 to 514 (FLGAMWLISITFLSIGYGDMV) constitute an intramembrane region (pore-forming). The helical transmembrane segment at 523–543 (VCLLTGIMGAGCTALVVAVVA) threads the bilayer. The segment at 561–637 (DTQLTKRIKN…LVDLSKMQNV (77 aa)) is calmodulin-binding. A coiled-coil region spans residues 642–669 (ITELNDRSEDLEKQIGSLESKLEHLTAS). The tract at residues 709–731 (ISDSPIGVSSTSFPTPYTSSSSC) is disordered. Residues 717–731 (SSTSFPTPYTSSSSC) are compositionally biased toward low complexity.

This sequence belongs to the potassium channel KCNN family. KCa2.3/KCNN3 subfamily. As to quaternary structure, homodimer. Heteromultimer with KCNN2 or KCNN1; this modulates plasma membrane expression and consequently the small conductance calcium-activated potassium channel activity. The complex is composed of 4 channel subunits each of which binds to a calmodulin subunit which regulates the channel activity through calcium-binding. Interacts with CALM1. As to expression, widely distributed in human tissues and is present at 20-60% of KCNN3 in the brain.

The protein resides in the cell membrane. It is found in the cytoplasm. Its subcellular location is the myofibril. It localises to the sarcomere. The protein localises to the z line. It carries out the reaction K(+)(in) = K(+)(out). With respect to regulation, inhibited by bee venom neurotoxin apamin. Functionally, small conductance calcium-activated potassium channel that mediates the voltage-independent transmembrane transfer of potassium across the cell membrane through a constitutive interaction with calmodulin which binds the intracellular calcium allowing its opening. The current is characterized by a voltage-independent activation, an intracellular calcium concentration increase-dependent activation and a single-channel conductance of 10 picosiemens. Also presents an inwardly rectifying current, thus reducing its already small outward conductance of potassium ions, which is particularly the case when the membrane potential displays positive values, above + 20 mV. Activation is followed by membrane hyperpolarization. Thought to regulate neuronal excitability by contributing to the slow component of synaptic afterhyperpolarization. In terms of biological role, does not function as a small conductance calcium-activated potassium channel. Selectively suppresses endogenous KCNN3 currents, in a dominant-negative fashion by decreasing the abundance of functional channels in the plasma membrane, possibly by selectively coassembling with and sequestering native KCNN3 protein in intracellular compartments. This dominant inhibitory effect extends to other members of the SK subfamily. The sequence is that of Small conductance calcium-activated potassium channel protein 3 from Homo sapiens (Human).